A 338-amino-acid polypeptide reads, in one-letter code: Glycerol-3-phosphate dehydrogenase [NAD(P)+] (338 aa).

NADPH is bound by residues Trp11, Arg30, and Lys107. Sn-glycerol 3-phosphate contacts are provided by Lys107, Gly140, and Ser142. Ala144 is an NADPH binding site. The sn-glycerol 3-phosphate site is built by Lys195, Asp248, Ser258, Arg259, and Asn260. Lys195 functions as the Proton acceptor in the catalytic mechanism. Arg259 is a binding site for NADPH. Residues Val283 and Glu285 each coordinate NADPH.

This sequence belongs to the NAD-dependent glycerol-3-phosphate dehydrogenase family.

It localises to the cytoplasm. It carries out the reaction sn-glycerol 3-phosphate + NAD(+) = dihydroxyacetone phosphate + NADH + H(+). The enzyme catalyses sn-glycerol 3-phosphate + NADP(+) = dihydroxyacetone phosphate + NADPH + H(+). Its pathway is membrane lipid metabolism; glycerophospholipid metabolism. Catalyzes the reduction of the glycolytic intermediate dihydroxyacetone phosphate (DHAP) to sn-glycerol 3-phosphate (G3P), the key precursor for phospholipid synthesis. The protein is Glycerol-3-phosphate dehydrogenase [NAD(P)+] of Ralstonia nicotianae (strain ATCC BAA-1114 / GMI1000) (Ralstonia solanacearum).